An 887-amino-acid polypeptide reads, in one-letter code: ABC transporter A family member 10 (887 aa).

The next 7 membrane-spanning stretches (helical) occupy residues 38–58 (GIQYIIVLVILHYTIPNVITL), 198–218 (YLYVIYLPLLFLFSLQQLLVT), 245–265 (IIIVQTITNVINILLVMVVLY), 277–297 (VMLFLQFLLYSFSMVAIGIIL), 309–329 (AISSFLLLILVGVSCFYQFYL), 335–355 (SSWLRSILFLFSPCAFGEFLY), and 376–396 (ISFLFLIIDIFLYFTIAWYIT). Positions 443–469 (NNCNNNNTSPSSSSSSQSSPLNKPLLS) are enriched in low complexity. The interval 443–474 (NNCNNNNTSPSSSSSSQSSPLNKPLLSGDSDD) is disordered. The region spanning 481 to 728 (IRLVNLKKTY…FNLGYILTIV (248 aa)) is the ABC transporter domain. 519–526 (GQNGSGKT) provides a ligand contact to ATP. The segment covering 774 to 797 (NNNNNENNSNNSDGSSSSSDSSSS) has biased composition (low complexity). Residues 774 to 799 (NNNNNENNSNNSDGSSSSSDSSSSKD) are disordered.

It belongs to the ABC transporter superfamily. ABCA family.

The protein resides in the membrane. The polypeptide is ABC transporter A family member 10 (abcA10) (Dictyostelium discoideum (Social amoeba)).